Consider the following 256-residue polypeptide: NAD-dependent protein deacetylase (256 aa).

The 254-residue stretch at 1-254 (MDISYHEKIS…KDILDVIKSE (254 aa)) folds into the Deacetylase sirtuin-type domain. Positions 28, 32, 39, 40, 105, 107, 108, and 123 each coordinate NAD(+). Phenylalanine 39 contributes to the nicotinamide binding site. The nicotinamide site is built by isoleucine 107 and aspartate 108. The Proton acceptor role is filled by histidine 123. Positions 131, 134, 156, and 159 each coordinate Zn(2+). 3 residues coordinate NAD(+): threonine 197, serine 198, and asparagine 222.

This sequence belongs to the sirtuin family. Class U subfamily. The cofactor is Zn(2+).

The protein resides in the cytoplasm. The catalysed reaction is N(6)-acetyl-L-lysyl-[protein] + NAD(+) + H2O = 2''-O-acetyl-ADP-D-ribose + nicotinamide + L-lysyl-[protein]. Functionally, NAD-dependent protein deacetylase which modulates the activities of several enzymes which are inactive in their acetylated form. The protein is NAD-dependent protein deacetylase of Thermodesulfovibrio yellowstonii (strain ATCC 51303 / DSM 11347 / YP87).